A 341-amino-acid chain; its full sequence is Tyrosine recombinase XerC (341 aa).

The Core-binding (CB) domain occupies 14–105 (PDAAEALERW…GVRSFFRWAD (92 aa)). Residues 126–309 (PLPRPLAADD…DAEHLLSVYE (184 aa)) form the Tyr recombinase domain. Residues Arg-169, Lys-193, His-261, Arg-264, and His-287 contribute to the active site. The active-site O-(3'-phospho-DNA)-tyrosine intermediate is the Tyr-296.

This sequence belongs to the 'phage' integrase family. XerC subfamily. Forms a cyclic heterotetrameric complex composed of two molecules of XerC and two molecules of XerD.

The protein localises to the cytoplasm. Its function is as follows. Site-specific tyrosine recombinase, which acts by catalyzing the cutting and rejoining of the recombining DNA molecules. The XerC-XerD complex is essential to convert dimers of the bacterial chromosome into monomers to permit their segregation at cell division. It also contributes to the segregational stability of plasmids. In Rhodospirillum centenum (strain ATCC 51521 / SW), this protein is Tyrosine recombinase XerC.